A 421-amino-acid chain; its full sequence is 4-hydroxy-3-methylbut-2-en-1-yl diphosphate synthase (flavodoxin) (421 aa).

[4Fe-4S] cluster contacts are provided by C298, C301, C344, and E351.

This sequence belongs to the IspG family. Requires [4Fe-4S] cluster as cofactor.

The enzyme catalyses (2E)-4-hydroxy-3-methylbut-2-enyl diphosphate + oxidized [flavodoxin] + H2O + 2 H(+) = 2-C-methyl-D-erythritol 2,4-cyclic diphosphate + reduced [flavodoxin]. Its pathway is isoprenoid biosynthesis; isopentenyl diphosphate biosynthesis via DXP pathway; isopentenyl diphosphate from 1-deoxy-D-xylulose 5-phosphate: step 5/6. Its function is as follows. Converts 2C-methyl-D-erythritol 2,4-cyclodiphosphate (ME-2,4cPP) into 1-hydroxy-2-methyl-2-(E)-butenyl 4-diphosphate. This chain is 4-hydroxy-3-methylbut-2-en-1-yl diphosphate synthase (flavodoxin), found in Neisseria meningitidis serogroup B (strain ATCC BAA-335 / MC58).